The sequence spans 128 residues: 3-aminoacrylate deaminase RutC (128 aa).

It belongs to the RutC family. In terms of assembly, homotrimer.

The enzyme catalyses (Z)-3-aminoacrylate + H2O + H(+) = 3-oxopropanoate + NH4(+). Involved in pyrimidine catabolism. Catalyzes the deamination of 3-aminoacrylate to malonic semialdehyde, a reaction that can also occur spontaneously. RutC may facilitate the reaction and modulate the metabolic fitness, rather than catalyzing essential functions. This Escherichia coli O111:H- (strain 11128 / EHEC) protein is 3-aminoacrylate deaminase RutC.